The primary structure comprises 293 residues: Nucleotide-binding protein BBR47_52620 (293 aa).

Residue 17–24 participates in ATP binding; sequence GMSGAGKT. 68-71 provides a ligand contact to GTP; the sequence is DLRG.

It belongs to the RapZ-like family.

In terms of biological role, displays ATPase and GTPase activities. This Brevibacillus brevis (strain 47 / JCM 6285 / NBRC 100599) protein is Nucleotide-binding protein BBR47_52620.